Reading from the N-terminus, the 527-residue chain is MQLQKPLKIGLGMMGAGLFGIIFGWVLFPVILKSQLKKEMALSKKTDVRAMWEKIPFALDFKVYMFNYTNVEEIMKGAAPIVKEIGPFHFDEWKEKVDIEDHDEDDTITYKKRDYFYFRPDKSGPGLTGEEVVVMPHLLMLSMATIVNNDKPAMLNMLGKAFNGIFDEPKDIFMRVKVLDLLFRGIIINCARTEFAPKAVCTALKKEGATGMTFEPNNQFRFSLFGMRNGTIDPHVVTVRRGIKNVMDVGKVIAIDGKTEQDVWRDKCNEFEGTDGTVFPPFLTEKDNLESFSGDLCRSFKPWYQKKTSYRGIKTNRYVANIGDFANDPELQCYCDSPDKCPPKGLMDLMKCMKAPMYASLPHYLDSDPQLLKDVKGLSPDANEHGIEIDFEPISGTPMVAKQRVQFNIILLKADKMDLIKDLPGTMTPLFWIEEGLALNKTFVKMLKNQLFIPKRIVSVVKWLLAGVGFVGLVGSLVYQFKGKMINFALSPSSAPVTKVNPEINQQNQPKDISIIGESQNPPKVDM.

At Met1 to Gly10 the chain is on the cytoplasmic side. Residues Leu11–Ile31 form a helical membrane-spanning segment. Over Leu32 to Arg456 the chain is Extracellular. N-linked (GlcNAc...) asparagine glycosylation is found at Asn67 and Asn229. Disulfide bonds link Cys268-Cys333, Cys297-Cys352, and Cys335-Cys341. Asn440 carries an N-linked (GlcNAc...) asparagine glycan. The chain crosses the membrane as a helical span at residues Ile457–Leu477. At Val478–Met527 the chain is on the cytoplasmic side.

This sequence belongs to the CD36 family. As to expression, principal component of the olfactory cilia membrane. Localizes to the antennal tissue with two to three fold higher expression in males compared to females.

It is found in the cell membrane. In terms of biological role, plays an olfactory role that is not restricted to pheromone sensitivity. This chain is Sensory neuron membrane protein 1, found in Ostrinia nubilalis (European corn borer).